The chain runs to 437 residues: Glutamate-1-semialdehyde 2,1-aminomutase (437 aa).

Position 274 is an N6-(pyridoxal phosphate)lysine (Lys274).

It belongs to the class-III pyridoxal-phosphate-dependent aminotransferase family. HemL subfamily. As to quaternary structure, homodimer. It depends on pyridoxal 5'-phosphate as a cofactor.

It is found in the cytoplasm. It catalyses the reaction (S)-4-amino-5-oxopentanoate = 5-aminolevulinate. It participates in porphyrin-containing compound metabolism; protoporphyrin-IX biosynthesis; 5-aminolevulinate from L-glutamyl-tRNA(Glu): step 2/2. This Paracidovorax citrulli (strain AAC00-1) (Acidovorax citrulli) protein is Glutamate-1-semialdehyde 2,1-aminomutase.